The sequence spans 798 residues: MEIRGALDLRKRQVLIFLVLLGLSRAGTESAHYSVAEETEIGSFVANLARDLGLGVEELSSREARVVSDDNKKYLHLDLLTGNLLLNEKLDRDELCGSTEPCVLHFQVVLENPLQFFRVELRVKDINDHSPTFLDKEILIKISEGTTVGATFLMESAQDLDVGSNSLQNYTISPNSHFYIKIPDSSDRKIYPELVLDRALDYEQEAELRLTLTAVDGGSPPKSGTTLVLIKVLDINDNAPEFPQSLYEVQVPEDRPLGSWIATISAKDLDAGNYGKISYTFFHASEDIRKTFEINPISGEVNLRSPLDFEVIQSYTINIQATDGGGLSGKCTLLVKVMDINDNPPEVTISSITKRIPENASETLVALFSILDQDSGDNGRMICSIQDNLPFFLKPTFKNFFTLVSEKALDRESQAEYNITITVTDLGTPRLKTEYNITVLVSDVNDNAPAFTQTSYTLFLRENNSPALHIGSVSATDRDSGTNAQVTYSLLPPQDPQLPLASLVSINADNGHLFALRSLDYEALQEFEFRVGATDRGSPALSSEALVRVLVLDANDNSPFVLYPLQNGSAPCTELVPRAAEPGYLVTKVVAVDGDSGQNAWLSYQLLKATEPGLFGVWAHNGEVRTARLLSERDAAKHRLVVLVKDNGEPPRSATATLHVLLVDGFSQPYLPLPEAAPAQAQADSLTVYLVVALASVSSLFLFSVLLFVAVRLCRRSRAASVGRCSVPEGPFPGHLVDVSGTGTLSQSYQYEVCLTGGSGTNEFKFLKPIIPNFQVHDTGKNMGEIENFRNSFGLNIQ.

The first 26 residues, 1–26 (MEIRGALDLRKRQVLIFLVLLGLSRA), serve as a signal peptide directing secretion. Topologically, residues 27–686 (GTESAHYSVA…APAQAQADSL (660 aa)) are extracellular. Cadherin domains follow at residues 35–133 (VAEE…SPTF), 138–242 (ILIK…APEF), 247–347 (YEVQ…PPEV), 352–451 (ITKR…APAF), and 456–561 (YTLF…SPFV). Cysteine 96 and cysteine 102 are oxidised to a cystine. An N-linked (GlcNAc...) asparagine glycan is attached at asparagine 169. N-linked (GlcNAc...) asparagine glycans are attached at residues asparagine 359, asparagine 418, and asparagine 436. Residue asparagine 567 is glycosylated (N-linked (GlcNAc...) asparagine). Residues 568–671 (GSAPCTELVP…LVDGFSQPYL (104 aa)) form the Cadherin 6 domain. A helical transmembrane segment spans residues 687–711 (TVYLVVALASVSSLFLFSVLLFVAV). Residues 712 to 798 (RLCRRSRAAS…FRNSFGLNIQ (87 aa)) lie on the Cytoplasmic side of the membrane.

The protein localises to the cell membrane. Potential calcium-dependent cell-adhesion protein. May be involved in the establishment and maintenance of specific neuronal connections in the brain. The sequence is that of Protocadherin beta-14 (PCDHB14) from Pan troglodytes (Chimpanzee).